A 154-amino-acid chain; its full sequence is SsrA-binding protein (154 aa).

The tract at residues E134–R154 is disordered.

Belongs to the SmpB family.

It is found in the cytoplasm. Functionally, required for rescue of stalled ribosomes mediated by trans-translation. Binds to transfer-messenger RNA (tmRNA), required for stable association of tmRNA with ribosomes. tmRNA and SmpB together mimic tRNA shape, replacing the anticodon stem-loop with SmpB. tmRNA is encoded by the ssrA gene; the 2 termini fold to resemble tRNA(Ala) and it encodes a 'tag peptide', a short internal open reading frame. During trans-translation Ala-aminoacylated tmRNA acts like a tRNA, entering the A-site of stalled ribosomes, displacing the stalled mRNA. The ribosome then switches to translate the ORF on the tmRNA; the nascent peptide is terminated with the 'tag peptide' encoded by the tmRNA and targeted for degradation. The ribosome is freed to recommence translation, which seems to be the essential function of trans-translation. This chain is SsrA-binding protein, found in Halalkalibacterium halodurans (strain ATCC BAA-125 / DSM 18197 / FERM 7344 / JCM 9153 / C-125) (Bacillus halodurans).